The sequence spans 63 residues: Adipokinetic prohormone type 1 (63 aa).

Residues 1-22 (MVQRCALVVLLVVAVAAALCSA) form the signal peptide. Q23 carries the post-translational modification Pyrrolidone carboxylic acid. T32 is modified (threonine amide).

This sequence belongs to the AKH/HRTH/RPCH family.

It localises to the secreted. Functionally, this hormone, released from cells in the corpora cardiaca, causes release of diglycerides from the fat body and stimulation of muscles to use these diglycerides as an energy source during energy-demanding processes. The polypeptide is Adipokinetic prohormone type 1 (Locusta migratoria (Migratory locust)).